Consider the following 402-residue polypeptide: Acetate kinase (402 aa).

Asparagine 10 is a binding site for Mg(2+). Residue lysine 17 participates in ATP binding. Residue arginine 89 participates in substrate binding. Aspartate 148 acts as the Proton donor/acceptor in catalysis. ATP is bound by residues 208–212, 283–285, and 334–338; these read HLGNG, DCR, and GIGEN. Glutamate 389 contacts Mg(2+).

Belongs to the acetokinase family. Homodimer. It depends on Mg(2+) as a cofactor. Mn(2+) is required as a cofactor.

It is found in the cytoplasm. The enzyme catalyses acetate + ATP = acetyl phosphate + ADP. It participates in metabolic intermediate biosynthesis; acetyl-CoA biosynthesis; acetyl-CoA from acetate: step 1/2. Functionally, catalyzes the formation of acetyl phosphate from acetate and ATP. Can also catalyze the reverse reaction. This chain is Acetate kinase, found in Actinobacillus pleuropneumoniae serotype 5b (strain L20).